The sequence spans 62 residues: SPbeta prophage-derived uncharacterized protein YonU (62 aa).

Residues 1–32 (MEKKFLDAIQQLTKELEMLKKDIDSIKEATVR) are a coiled coil.

This is SPbeta prophage-derived uncharacterized protein YonU (yonU) from Bacillus subtilis (strain 168).